The sequence spans 286 residues: Prohibitin-2, mitochondrial (286 aa).

Residues 1–13 are Mitochondrial matrix-facing; the sequence is MSFNKVPNIPGAP. A helical; Signal-anchor for type II membrane protein membrane pass occupies residues 14–32; it reads ALSALLKVSVIGGLGVYAL. Topologically, residues 33–286 are mitochondrial intermembrane; it reads TNSLYNVDGG…LQEMNLEPKK (254 aa). The stretch at 186–219 forms a coiled coil; it reads KEFTAAIEAKQVAAQEAERAKFIVEKAEQDRRSA.

This sequence belongs to the prohibitin family. As to quaternary structure, component of a prohibitin multimeric complex in mitochondrial membranes. Mostly expressed in proliferative tissues, including vasculature, shoot and root apical tissues.

It localises to the mitochondrion inner membrane. In terms of biological role, prohibitin probably acts as a holdase/unfoldase for the stabilization of newly synthesized mitochondrial proteins. This chain is Prohibitin-2, mitochondrial (PHB2), found in Arabidopsis thaliana (Mouse-ear cress).